A 214-amino-acid polypeptide reads, in one-letter code: Adenylate kinase (214 aa).

10 to 15 provides a ligand contact to ATP; it reads GTGKGT. An NMP region spans residues 30–59; sequence STGDILRENIQKKNTIGKKIHNILKNGELV. Residues threonine 31, arginine 36, 57–59, 85–88, and glutamine 92 contribute to the AMP site; these read ELV and GFPR. Residues 122–159 are LID; that stretch reads GRRVHTPSGRIYNINYNPPREEGKDDLTQEKLTIREDD. ATP-binding positions include arginine 123 and 132-133; that span reads IY. Residues arginine 156 and arginine 167 each contribute to the AMP site. Residue glutamine 200 participates in ATP binding.

Belongs to the adenylate kinase family. In terms of assembly, monomer.

The protein localises to the cytoplasm. It carries out the reaction AMP + ATP = 2 ADP. It participates in purine metabolism; AMP biosynthesis via salvage pathway; AMP from ADP: step 1/1. In terms of biological role, catalyzes the reversible transfer of the terminal phosphate group between ATP and AMP. Plays an important role in cellular energy homeostasis and in adenine nucleotide metabolism. This chain is Adenylate kinase, found in Buchnera aphidicola subsp. Schizaphis graminum (strain Sg).